A 97-amino-acid chain; its full sequence is Aspartyl/glutamyl-tRNA(Asn/Gln) amidotransferase subunit C (97 aa).

Belongs to the GatC family. As to quaternary structure, heterotrimer of A, B and C subunits.

The enzyme catalyses L-glutamyl-tRNA(Gln) + L-glutamine + ATP + H2O = L-glutaminyl-tRNA(Gln) + L-glutamate + ADP + phosphate + H(+). It catalyses the reaction L-aspartyl-tRNA(Asn) + L-glutamine + ATP + H2O = L-asparaginyl-tRNA(Asn) + L-glutamate + ADP + phosphate + 2 H(+). Its function is as follows. Allows the formation of correctly charged Asn-tRNA(Asn) or Gln-tRNA(Gln) through the transamidation of misacylated Asp-tRNA(Asn) or Glu-tRNA(Gln) in organisms which lack either or both of asparaginyl-tRNA or glutaminyl-tRNA synthetases. The reaction takes place in the presence of glutamine and ATP through an activated phospho-Asp-tRNA(Asn) or phospho-Glu-tRNA(Gln). The protein is Aspartyl/glutamyl-tRNA(Asn/Gln) amidotransferase subunit C of Synechococcus sp. (strain CC9311).